The sequence spans 306 residues: D-alanine--D-alanine ligase (306 aa).

Residues 101 to 300 (KVVMAAAGIP…FGELVTWMVE (200 aa)) enclose the ATP-grasp domain. 128–182 (LPPPYVLKPNTGGSSVGVFIVKEDQPHPPQELFRADWTFGESLMAEPFIKGLELT) serves as a coordination point for ATP. Mg(2+) is bound by residues D250, E267, and N269.

The protein belongs to the D-alanine--D-alanine ligase family. Requires Mg(2+) as cofactor. It depends on Mn(2+) as a cofactor.

The protein localises to the cytoplasm. It catalyses the reaction 2 D-alanine + ATP = D-alanyl-D-alanine + ADP + phosphate + H(+). It functions in the pathway cell wall biogenesis; peptidoglycan biosynthesis. In terms of biological role, cell wall formation. The chain is D-alanine--D-alanine ligase from Azorhizobium caulinodans (strain ATCC 43989 / DSM 5975 / JCM 20966 / LMG 6465 / NBRC 14845 / NCIMB 13405 / ORS 571).